The sequence spans 61 residues: Tryptophyllin-1 (61 aa).

The signal sequence occupies residues 1–22 (MDILKKSLFLALFLGLVSISFC). The propeptide occupies 23-53 (DEEKRQDDDESNESEEKKEIHEEGSQEERRE). Positions 24–61 (EEKRQDDDESNESEEKKEIHEEGSQEERREKPPPWVPV) are disordered. The segment covering 36 to 55 (SEEKKEIHEEGSQEERREKP) has biased composition (basic and acidic residues).

In terms of tissue distribution, expressed by the skin glands.

It localises to the secreted. In terms of biological role, the synthetic peptide inhibits bradykinin-induced relaxation of rat tail artery smooth muscle, and also has anti-proliferative effects on the human prostate cancer cell lines LNCaP, PC3 and DU145. This is Tryptophyllin-1 from Phyllomedusa sauvagei (Sauvage's leaf frog).